A 144-amino-acid polypeptide reads, in one-letter code: MHFKYIVAVSFLIASAYARSVQNDEQSLSQRDVLEEESLREIRGIGGKILSGLKTALKGAAKELASTYLHRKRTAEEHEVMKRLEAIMRDLDSLDYPEEASERETRGFNQDKIANLFTKKEKRILGPVLGLVGSALGGLIKKIG.

An N-terminal signal peptide occupies residues 1–18 (MHFKYIVAVSFLIASAYA). 2 consecutive propeptides follow at residues 19–43 (RSVQ…REIR) and 73–122 (RTAE…KKEK). I143 is subject to Isoleucine amide.

This sequence belongs to the bombinin family. In terms of tissue distribution, expressed by the skin glands.

The protein resides in the secreted. Maximin-3 shows antibacterial activity against both Gram-positive and Gram-negative bacteria. It also shows antimicrobial activity against the fungus C.albicans, but not against A.flavus nor P.uticale. It has little hemolytic activity. It possess a significant cytotoxicity against tumor cell lines. It possess a significant anti-HIV activity. It shows high spermicidal activity. In terms of biological role, maximin-H11 shows antimicrobial activity against bacteria and against the fungus C.albicans. Shows strong hemolytic activity. In Bombina maxima (Giant fire-bellied toad), this protein is Maximins 3/H11 type 2.